Here is a 389-residue protein sequence, read N- to C-terminus: Large envelope protein (389 aa).

Position 1 is an N-acetylmethionine (Met-1). The N-myristoyl glycine; by host moiety is linked to residue Gly-2. Residues 2 to 108 (GQNLSTSNPL…PPLRNTHPQA (107 aa)) are pre-S1. The tract at residues 2–163 (GQNLSTSNPL…FSRIGDPALN (162 aa)) is pre-S. The Virion surface; in external conformation portion of the chain corresponds to 2–170 (GQNLSTSNPL…ALNMENITSG (169 aa)). At 2-242 (GQNLSTSNPL…PGYRWMCLRR (241 aa)) the chain is on the intravirion; in internal conformation side. Residues 77–101 (LPANPPPASTNRQTGRQPTPLSPPL) form a disordered region. Residues 85 to 95 (STNRQTGRQPT) are compositionally biased toward polar residues. The segment at 109–163 (MQWNSTTFHQTLQDPRVRGLYFPAGGSSSGTVNPVPTTASPISSIFSRIGDPALN) is pre-S2. The helical transmembrane segment at 171–191 (LLGPLLVLQAGFFLLTRILTI) threads the bilayer. Residues 192 to 242 (PQSLDSWWTSLNFLGGTTVCLGQNSQSPTSNHSPTSCPPTCPGYRWMCLRR) lie on the Intravirion; in external conformation side of the membrane. A helical membrane pass occupies residues 243 to 263 (FIIFLFILLLCLIFLLVLLDY). At 264–337 (QGMLPVCPLI…WASARFSWLS (74 aa)) the chain is on the virion surface side. Residue Asn-309 is glycosylated (N-linked (GlcNAc...) asparagine; by host). A helical membrane pass occupies residues 338–358 (LLVPFVQWFVGLSPTVWLSVI). The Intravirion segment spans residues 359–364 (WMMWYW). Residues 365–387 (GPSLYRILSPFLPLLPIFFCLWV) form a helical membrane-spanning segment. The Virion surface portion of the chain corresponds to 388–389 (YI).

This sequence belongs to the orthohepadnavirus major surface antigen family. In its internal form (Li-HBsAg), interacts with the capsid protein and with the isoform S. Interacts with host chaperone CANX. In terms of assembly, associates with host chaperone CANX through its pre-S2 N glycan; this association may be essential for isoform M proper secretion. As to quaternary structure, interacts with isoform L. Interacts with the antigens of satellite virus HDV (HDVAgs); this interaction is required for encapsidation of HDV genomic RNA. Post-translationally, isoform M is N-terminally acetylated by host at a ratio of 90%, and N-glycosylated by host at the pre-S2 region. Myristoylated.

The protein localises to the virion membrane. Its function is as follows. The large envelope protein exists in two topological conformations, one which is termed 'external' or Le-HBsAg and the other 'internal' or Li-HBsAg. In its external conformation the protein attaches the virus to cell receptors and thereby initiating infection. This interaction determines the species specificity and liver tropism. This attachment induces virion internalization predominantly through caveolin-mediated endocytosis. The large envelope protein also assures fusion between virion membrane and endosomal membrane. In its internal conformation the protein plays a role in virion morphogenesis and mediates the contact with the nucleocapsid like a matrix protein. In terms of biological role, the middle envelope protein plays an important role in the budding of the virion. It is involved in the induction of budding in a nucleocapsid independent way. In this process the majority of envelope proteins bud to form subviral lipoprotein particles of 22 nm of diameter that do not contain a nucleocapsid. The protein is Large envelope protein of Hepatitis B virus genotype D (isolate Germany/1-91/1991) (HBV-D).